The chain runs to 343 residues: Dehydrodolichyl diphosphate synthase complex subunit SRT1 (343 aa).

Belongs to the UPP synthase family. Forms an active dehydrodolichyl diphosphate synthase complex with NUS1. Requires Mg(2+) as cofactor.

The protein resides in the lipid droplet. It catalyses the reaction n isopentenyl diphosphate + (2E,6E)-farnesyl diphosphate = a di-trans,poly-cis-polyprenyl diphosphate + n diphosphate. It functions in the pathway protein modification; protein glycosylation. With NUS1, forms the dehydrodolichyl diphosphate synthase (DDS) complex, an essential component of the dolichol monophosphate (Dol-P) biosynthetic machinery. Adds multiple copies of isopentenyl pyrophosphate (IPP) to farnesyl pyrophosphate (FPP) to produce dehydrodolichyl diphosphate (Dedol-PP), a precursor of dolichol which is utilized as a sugar carrier in protein glycosylation in the endoplasmic reticulum (ER). This chain is Dehydrodolichyl diphosphate synthase complex subunit SRT1, found in Saccharomyces cerevisiae (strain ATCC 204508 / S288c) (Baker's yeast).